We begin with the raw amino-acid sequence, 321 residues long: Cytochrome c biogenesis protein CcsA (321 aa).

Helical transmembrane passes span isoleucine 17–leucine 37, lysine 43–serine 63, leucine 71–isoleucine 91, leucine 98–leucine 118, methionine 143–isoleucine 163, valine 225–asparagine 245, glutamate 258–arginine 275, and alanine 286–leucine 306.

The protein belongs to the CcmF/CycK/Ccl1/NrfE/CcsA family. May interact with Ccs1.

It is found in the plastid. Its subcellular location is the chloroplast thylakoid membrane. In terms of biological role, required during biogenesis of c-type cytochromes (cytochrome c6 and cytochrome f) at the step of heme attachment. This is Cytochrome c biogenesis protein CcsA from Platanus occidentalis (Sycamore).